The sequence spans 221 residues: Endo-1,4-beta-xylanase A (221 aa).

The signal sequence occupies residues 1-16 (MKFFATIAALVVGAVA). In terms of domain architecture, GH11 spans 29–221 (PMLIERAGPG…GTGSASVTVS (193 aa)). Glu114 acts as the Nucleophile in catalysis. Glu208 (proton donor) is an active-site residue.

This sequence belongs to the glycosyl hydrolase 11 (cellulase G) family.

Its subcellular location is the secreted. It carries out the reaction Endohydrolysis of (1-&gt;4)-beta-D-xylosidic linkages in xylans.. Its pathway is glycan degradation; xylan degradation. Its function is as follows. Endo-1,4-beta-xylanase involved in the hydrolysis of xylan, a major structural heterogeneous polysaccharide found in plant biomass representing the second most abundant polysaccharide in the biosphere, after cellulose. The protein is Endo-1,4-beta-xylanase A (xynA) of Aureobasidium pullulans (Black yeast).